Here is an 84-residue protein sequence, read N- to C-terminus: ATP synthase subunit c (84 aa).

The next 2 helical transmembrane spans lie at 9-29 (IIGA…GFAI) and 54-74 (IVAG…LLFI).

This sequence belongs to the ATPase C chain family. F-type ATPases have 2 components, F(1) - the catalytic core - and F(0) - the membrane proton channel. F(1) has five subunits: alpha(3), beta(3), gamma(1), delta(1), epsilon(1). F(0) has three main subunits: a(1), b(2) and c(10-14). The alpha and beta chains form an alternating ring which encloses part of the gamma chain. F(1) is attached to F(0) by a central stalk formed by the gamma and epsilon chains, while a peripheral stalk is formed by the delta and b chains.

The protein resides in the cell inner membrane. Functionally, f(1)F(0) ATP synthase produces ATP from ADP in the presence of a proton or sodium gradient. F-type ATPases consist of two structural domains, F(1) containing the extramembraneous catalytic core and F(0) containing the membrane proton channel, linked together by a central stalk and a peripheral stalk. During catalysis, ATP synthesis in the catalytic domain of F(1) is coupled via a rotary mechanism of the central stalk subunits to proton translocation. In terms of biological role, key component of the F(0) channel; it plays a direct role in translocation across the membrane. A homomeric c-ring of between 10-14 subunits forms the central stalk rotor element with the F(1) delta and epsilon subunits. The sequence is that of ATP synthase subunit c from Actinobacillus pleuropneumoniae serotype 7 (strain AP76).